The primary structure comprises 547 residues: CTP synthase (547 aa).

The tract at residues 1-273 (MNNKKLKSKF…DHFILNHFQL (273 aa)) is amidoligase domain. Residue serine 19 participates in CTP binding. Serine 19 lines the UTP pocket. 20–25 (SLGKGI) provides a ligand contact to ATP. Tyrosine 60 serves as a coordination point for L-glutamine. Residue aspartate 77 participates in ATP binding. Residues aspartate 77 and glutamate 147 each coordinate Mg(2+). CTP-binding positions include 154 to 156 (DIE), 194 to 199 (KTKPTQ), and lysine 230. Residues 194–199 (KTKPTQ) and lysine 230 each bind UTP. The Glutamine amidotransferase type-1 domain maps to 306–539 (YVILHDAYLS…VEAALLKNGK (234 aa)). Glycine 361 contributes to the L-glutamine binding site. Cysteine 388 (nucleophile; for glutamine hydrolysis) is an active-site residue. Residues 389 to 392 (FGMQ), glutamate 412, and arginine 466 contribute to the L-glutamine site. Catalysis depends on residues histidine 512 and glutamate 514.

The protein belongs to the CTP synthase family. As to quaternary structure, homotetramer.

The catalysed reaction is UTP + L-glutamine + ATP + H2O = CTP + L-glutamate + ADP + phosphate + 2 H(+). The enzyme catalyses L-glutamine + H2O = L-glutamate + NH4(+). It catalyses the reaction UTP + NH4(+) + ATP = CTP + ADP + phosphate + 2 H(+). Its pathway is pyrimidine metabolism; CTP biosynthesis via de novo pathway; CTP from UDP: step 2/2. Allosterically activated by GTP, when glutamine is the substrate; GTP has no effect on the reaction when ammonia is the substrate. The allosteric effector GTP functions by stabilizing the protein conformation that binds the tetrahedral intermediate(s) formed during glutamine hydrolysis. Inhibited by the product CTP, via allosteric rather than competitive inhibition. In terms of biological role, catalyzes the ATP-dependent amination of UTP to CTP with either L-glutamine or ammonia as the source of nitrogen. Regulates intracellular CTP levels through interactions with the four ribonucleotide triphosphates. The protein is CTP synthase of Phytoplasma australiense.